Consider the following 409-residue polypeptide: Elongation factor Tu (409 aa).

A tr-type G domain is found at 10–214 (KPHVNVGTIG…AVDSYIPTPE (205 aa)). Residues 19 to 26 (GHVDHGKT) form a G1 region. 19 to 26 (GHVDHGKT) lines the GTP pocket. Thr26 contributes to the Mg(2+) binding site. Positions 60-64 (GITIN) are G2. Residues 81–84 (DCPG) are G3. GTP contacts are provided by residues 81–85 (DCPGH) and 136–139 (NKAD). Residues 136–139 (NKAD) are G4. Positions 174 to 176 (SAL) are G5.

The protein belongs to the TRAFAC class translation factor GTPase superfamily. Classic translation factor GTPase family. EF-Tu/EF-1A subfamily. In terms of assembly, monomer.

It is found in the cytoplasm. The enzyme catalyses GTP + H2O = GDP + phosphate + H(+). GTP hydrolase that promotes the GTP-dependent binding of aminoacyl-tRNA to the A-site of ribosomes during protein biosynthesis. The protein is Elongation factor Tu of Synechococcus sp. (strain JA-2-3B'a(2-13)) (Cyanobacteria bacterium Yellowstone B-Prime).